The chain runs to 420 residues: Glucose-1-phosphate adenylyltransferase (420 aa).

Residues Y107, G172, 187-188 (EK), and S205 each bind alpha-D-glucose 1-phosphate.

Belongs to the bacterial/plant glucose-1-phosphate adenylyltransferase family. As to quaternary structure, homotetramer.

It carries out the reaction alpha-D-glucose 1-phosphate + ATP + H(+) = ADP-alpha-D-glucose + diphosphate. Its pathway is glycan biosynthesis; glycogen biosynthesis. In terms of biological role, involved in the biosynthesis of ADP-glucose, a building block required for the elongation reactions to produce glycogen. Catalyzes the reaction between ATP and alpha-D-glucose 1-phosphate (G1P) to produce pyrophosphate and ADP-Glc. The protein is Glucose-1-phosphate adenylyltransferase of Bradyrhizobium diazoefficiens (strain JCM 10833 / BCRC 13528 / IAM 13628 / NBRC 14792 / USDA 110).